The chain runs to 175 residues: ATP-dependent protease subunit HslV (175 aa).

The active site involves Thr-2. Ala-159, Asp-162, and Thr-165 together coordinate Na(+).

This sequence belongs to the peptidase T1B family. HslV subfamily. As to quaternary structure, a double ring-shaped homohexamer of HslV is capped on each side by a ring-shaped HslU homohexamer. The assembly of the HslU/HslV complex is dependent on binding of ATP.

The protein resides in the cytoplasm. It catalyses the reaction ATP-dependent cleavage of peptide bonds with broad specificity.. With respect to regulation, allosterically activated by HslU binding. Protease subunit of a proteasome-like degradation complex believed to be a general protein degrading machinery. The protein is ATP-dependent protease subunit HslV of Ligilactobacillus salivarius (strain UCC118) (Lactobacillus salivarius).